A 315-amino-acid chain; its full sequence is Homeobox-leucine zipper protein HAT3 (315 aa).

The segment at 140–163 is disordered; sequence SCSLGGGSDDEDGSGNGDDSSRKK. A DNA-binding region (homeobox) is located at residues 159–218; the sequence is SSRKKLRLSKEQALVLEETFKEHSTLNPKQKMALAKQLNLRTRQVEVWFQNRRARTKLKQ. Positions 226–247 are leucine-zipper; the sequence is LKRCCENLTDENRRLQKEVSEL. The span at 280-305 shows a compositional bias: low complexity; that stretch reads SSSSVAPPVMNSSSPMGPMSPWAAMP. A disordered region spans residues 280–315; sequence SSSSVAPPVMNSSSPMGPMSPWAAMPLRQRPAAGSH.

Belongs to the HD-ZIP homeobox family. Class II subfamily.

The protein localises to the nucleus. Probable transcription factor. The protein is Homeobox-leucine zipper protein HAT3 (HAT3) of Arabidopsis thaliana (Mouse-ear cress).